We begin with the raw amino-acid sequence, 274 residues long: uncharacterized protein (274 aa).

Residues 1 to 30 (MTVYTPTSERQAPATTHRQMWALGDYAAIA) form the signal peptide.

It to M.tuberculosis Rv1405c.

This is an uncharacterized protein from Mycobacterium tuberculosis (strain CDC 1551 / Oshkosh).